The chain runs to 85 residues: UPF0512 protein U (85 aa).

Belongs to the UPF0512 family.

The sequence is that of UPF0512 protein U from Dictyostelium discoideum (Social amoeba).